The sequence spans 376 residues: Queuine tRNA-ribosyltransferase (376 aa).

Catalysis depends on D93, which acts as the Proton acceptor. Residues 93-97 (DSGGF), D147, Q190, and G217 contribute to the substrate site. Residues 248–254 (GVGKPDD) are RNA binding. D267 acts as the Nucleophile in catalysis. Residues C305, C307, C310, and H336 each coordinate Zn(2+).

Belongs to the queuine tRNA-ribosyltransferase family. Homodimer. Within each dimer, one monomer is responsible for RNA recognition and catalysis, while the other monomer binds to the replacement base PreQ1. It depends on Zn(2+) as a cofactor.

The catalysed reaction is 7-aminomethyl-7-carbaguanine + guanosine(34) in tRNA = 7-aminomethyl-7-carbaguanosine(34) in tRNA + guanine. It participates in tRNA modification; tRNA-queuosine biosynthesis. Catalyzes the base-exchange of a guanine (G) residue with the queuine precursor 7-aminomethyl-7-deazaguanine (PreQ1) at position 34 (anticodon wobble position) in tRNAs with GU(N) anticodons (tRNA-Asp, -Asn, -His and -Tyr). Catalysis occurs through a double-displacement mechanism. The nucleophile active site attacks the C1' of nucleotide 34 to detach the guanine base from the RNA, forming a covalent enzyme-RNA intermediate. The proton acceptor active site deprotonates the incoming PreQ1, allowing a nucleophilic attack on the C1' of the ribose to form the product. After dissociation, two additional enzymatic reactions on the tRNA convert PreQ1 to queuine (Q), resulting in the hypermodified nucleoside queuosine (7-(((4,5-cis-dihydroxy-2-cyclopenten-1-yl)amino)methyl)-7-deazaguanosine). This chain is Queuine tRNA-ribosyltransferase, found in Jannaschia sp. (strain CCS1).